We begin with the raw amino-acid sequence, 218 residues long: Small ribosomal subunit protein uS3 (218 aa).

The region spanning 38–106 (IREFISKRLS…RVHINILEIK (69 aa)) is the KH type-2 domain.

It belongs to the universal ribosomal protein uS3 family. In terms of assembly, part of the 30S ribosomal subunit. Forms a tight complex with proteins S10 and S14.

Functionally, binds the lower part of the 30S subunit head. Binds mRNA in the 70S ribosome, positioning it for translation. The sequence is that of Small ribosomal subunit protein uS3 from Bacillus pumilus (strain SAFR-032).